The primary structure comprises 702 residues: Dissimilatory sulfite reductase MccA (702 aa).

Positions 1-39 (MLSGWSVLKGGNMKYWDKALLSLFMCVSTLSIAATHAVA) are cleaved as a signal peptide. Heme c contacts are provided by Cys155, Cys158, His159, and His171. Residues Lys220 and Tyr297 each coordinate substrate. Residues Cys314, Cys317, His318, Cys351, Cys354, His355, His360, Cys372, Cys375, and His376 each coordinate heme c. Residue Arg378 participates in substrate binding. Cu(+) is bound at residue Cys411. Heme c contacts are provided by His423, Cys430, Cys433, His434, His437, Cys474, Cys477, His478, His491, Cys496, Cys499, and His500. Residue Cys507 coordinates Cu(+). Residues His528, Cys574, Cys590, His591, and His675 each coordinate heme c.

This sequence belongs to the multiheme cytochrome c family. In terms of assembly, homotrimer. Cu(+) is required as a cofactor. The cofactor is heme c.

The protein localises to the periplasm. It carries out the reaction [protein]-disulfide + hydrogen sulfide + 2 A + 3 H2O = [protein]-dithiol + sulfite + 2 AH2 + H(+). Its pathway is sulfur metabolism; sulfite reduction. Functionally, respiratory sulfite reductase that catalyzes the reduction of sulfite to sulfide in a single step, consuming six electrons in the process. Required for sulfite respiration under anaerobic growth conditions. Has only marginal activity with nitrite. This Wolinella succinogenes (strain ATCC 29543 / DSM 1740 / CCUG 13145 / JCM 31913 / LMG 7466 / NCTC 11488 / FDC 602W) (Vibrio succinogenes) protein is Dissimilatory sulfite reductase MccA.